Reading from the N-terminus, the 627-residue chain is 1-deoxy-D-xylulose-5-phosphate synthase (627 aa).

Thiamine diphosphate-binding positions include H75 and 116–118; that span reads AHS. D147 provides a ligand contact to Mg(2+). Residues 148–149, N177, Y284, and E366 each bind thiamine diphosphate; that span reads GA. N177 serves as a coordination point for Mg(2+).

It belongs to the transketolase family. DXPS subfamily. In terms of assembly, homodimer. Mg(2+) is required as a cofactor. It depends on thiamine diphosphate as a cofactor.

It catalyses the reaction D-glyceraldehyde 3-phosphate + pyruvate + H(+) = 1-deoxy-D-xylulose 5-phosphate + CO2. It functions in the pathway metabolic intermediate biosynthesis; 1-deoxy-D-xylulose 5-phosphate biosynthesis; 1-deoxy-D-xylulose 5-phosphate from D-glyceraldehyde 3-phosphate and pyruvate: step 1/1. Its function is as follows. Catalyzes the acyloin condensation reaction between C atoms 2 and 3 of pyruvate and glyceraldehyde 3-phosphate to yield 1-deoxy-D-xylulose-5-phosphate (DXP). The chain is 1-deoxy-D-xylulose-5-phosphate synthase from Bordetella petrii (strain ATCC BAA-461 / DSM 12804 / CCUG 43448).